Consider the following 94-residue polypeptide: ESAT-6-like protein EsxI (94 aa).

Belongs to the WXG100 family. ESAT-6 subfamily.

The protein resides in the secreted. The protein is ESAT-6-like protein EsxI of Mycobacterium tuberculosis (strain ATCC 25618 / H37Rv).